The sequence spans 292 residues: ATP synthase gamma chain (292 aa).

It belongs to the ATPase gamma chain family. In terms of assembly, F-type ATPases have 2 components, CF(1) - the catalytic core - and CF(0) - the membrane proton channel. CF(1) has five subunits: alpha(3), beta(3), gamma(1), delta(1), epsilon(1). CF(0) has three main subunits: a, b and c.

It is found in the cell inner membrane. In terms of biological role, produces ATP from ADP in the presence of a proton gradient across the membrane. The gamma chain is believed to be important in regulating ATPase activity and the flow of protons through the CF(0) complex. This chain is ATP synthase gamma chain, found in Brucella anthropi (strain ATCC 49188 / DSM 6882 / CCUG 24695 / JCM 21032 / LMG 3331 / NBRC 15819 / NCTC 12168 / Alc 37) (Ochrobactrum anthropi).